The sequence spans 564 residues: MLAGVLLLQIWLKCKYANVQFGEHGFNGDEFYLDFYINENFSTKQFAKIESDLNSLSSKLEGISQKFVSLDEALSFFENDQFTKNLLKKSNLNKFKITFFENKHFWIEDLTLTFIKKSFIKLLNVSVNYFLGDPSQLQLQRINGIFAQSKKELEQLIKENEERLKKDHRSLGKQLELFSFDPLIGAGLPIWLAKGTTLRNIIGNFVHHQQLLFGFNTVCSPVLANIELFKISGHYQHYKEDMFPAIKLDSQAMMLRPMTCPHHCLIFKQKRYSYKKMPQRFSEDSILHRFEASGGLIGLERVRCMTLLDNHIFCRADQIKSEIKNAFNLIQKVNKKFGFIFDRIDLSLHDPKNQSKFIDNPGLWRESESQMENVLKDLNIQYQKEIGAAAFYGPKIDFQFKTIFKKMITIATIQLDFLLPEKFDLTYIDKKNTLKKPVIIHVGIIGTYERFIAALLEKTSGNFPLWLAPVQAVIIPVNIQKHLKAAKKLYNKLLKENIRVNLDDNQDRLAKKVRQAIIEKIPLQLIVGDKEIENLEKLTCRGFKGEKITRISFNNFVKRVRRDG.

Positions 167 to 464 are catalytic; sequence DHRSLGKQLE…LLEKTSGNFP (298 aa). Positions 260, 311, and 441 each coordinate Zn(2+).

It belongs to the class-II aminoacyl-tRNA synthetase family. In terms of assembly, homodimer. Zn(2+) is required as a cofactor.

It localises to the cytoplasm. The enzyme catalyses tRNA(Thr) + L-threonine + ATP = L-threonyl-tRNA(Thr) + AMP + diphosphate + H(+). Its function is as follows. Catalyzes the attachment of threonine to tRNA(Thr) in a two-step reaction: L-threonine is first activated by ATP to form Thr-AMP and then transferred to the acceptor end of tRNA(Thr). Also edits incorrectly charged L-seryl-tRNA(Thr). The chain is Threonine--tRNA ligase from Mycoplasma genitalium (strain ATCC 33530 / DSM 19775 / NCTC 10195 / G37) (Mycoplasmoides genitalium).